Reading from the N-terminus, the 156-residue chain is Phosphopantetheine adenylyltransferase (156 aa).

S9 is a substrate binding site. ATP-binding positions include 9 to 10 (SF) and H17. Residues K41, I74, and K88 each contribute to the substrate site. ATP-binding positions include 89 to 91 (GLR), E99, and 123 to 129 (LLHVSSS).

This sequence belongs to the bacterial CoaD family. As to quaternary structure, homohexamer. It depends on Mg(2+) as a cofactor.

Its subcellular location is the cytoplasm. It carries out the reaction (R)-4'-phosphopantetheine + ATP + H(+) = 3'-dephospho-CoA + diphosphate. It functions in the pathway cofactor biosynthesis; coenzyme A biosynthesis; CoA from (R)-pantothenate: step 4/5. In terms of biological role, reversibly transfers an adenylyl group from ATP to 4'-phosphopantetheine, yielding dephospho-CoA (dPCoA) and pyrophosphate. The protein is Phosphopantetheine adenylyltransferase of Kocuria rhizophila (strain ATCC 9341 / DSM 348 / NBRC 103217 / DC2201).